The primary structure comprises 330 residues: tRNA U34 carboxymethyltransferase (330 aa).

Carboxy-S-adenosyl-L-methionine is bound by residues Lys-91, Trp-105, Lys-110, Gly-130, 152–154, 181–182, Met-196, Tyr-200, and Arg-315; these read DPS and IE.

This sequence belongs to the class I-like SAM-binding methyltransferase superfamily. CmoB family. In terms of assembly, homotetramer.

The catalysed reaction is carboxy-S-adenosyl-L-methionine + 5-hydroxyuridine(34) in tRNA = 5-carboxymethoxyuridine(34) in tRNA + S-adenosyl-L-homocysteine + H(+). Functionally, catalyzes carboxymethyl transfer from carboxy-S-adenosyl-L-methionine (Cx-SAM) to 5-hydroxyuridine (ho5U) to form 5-carboxymethoxyuridine (cmo5U) at position 34 in tRNAs. The sequence is that of tRNA U34 carboxymethyltransferase from Shewanella denitrificans (strain OS217 / ATCC BAA-1090 / DSM 15013).